Reading from the N-terminus, the 134-residue chain is Small ribosomal subunit protein uS8c (134 aa).

It belongs to the universal ribosomal protein uS8 family. As to quaternary structure, part of the 30S ribosomal subunit.

It is found in the plastid. The protein localises to the chloroplast. Its function is as follows. One of the primary rRNA binding proteins, it binds directly to 16S rRNA central domain where it helps coordinate assembly of the platform of the 30S subunit. The polypeptide is Small ribosomal subunit protein uS8c (rps8) (Chloranthus spicatus (Chulantree)).